The chain runs to 183 residues: Bifunctional protein PyrR (183 aa).

The PRPP-binding motif lies at 102-114 (VVLVDDVLYTGRT).

It belongs to the purine/pyrimidine phosphoribosyltransferase family. PyrR subfamily. As to quaternary structure, homodimer and homohexamer; in equilibrium.

The enzyme catalyses UMP + diphosphate = 5-phospho-alpha-D-ribose 1-diphosphate + uracil. In terms of biological role, regulates transcriptional attenuation of the pyrimidine nucleotide (pyr) operon by binding in a uridine-dependent manner to specific sites on pyr mRNA. This disrupts an antiterminator hairpin in the RNA and favors formation of a downstream transcription terminator, leading to a reduced expression of downstream genes. Functionally, also displays a weak uracil phosphoribosyltransferase activity which is not physiologically significant. The polypeptide is Bifunctional protein PyrR (Listeria welshimeri serovar 6b (strain ATCC 35897 / DSM 20650 / CCUG 15529 / CIP 8149 / NCTC 11857 / SLCC 5334 / V8)).